Consider the following 219-residue polypeptide: Adenylate kinase (219 aa).

10-15 (GAGKGT) is a binding site for ATP. The tract at residues 30–59 (STGDMLRVAVKVGTPLGIEAKKIMDSGGLV) is NMP. AMP contacts are provided by residues Thr-31, Arg-36, 57–59 (GLV), 85–88 (GFPR), and Gln-92. The tract at residues 122–159 (GRRTHLKSGRTYHITYNQPKVEGIDDITGEKLVQRSDD) is LID. ATP-binding positions include Arg-123 and 132–133 (TY). The AMP site is built by Arg-156 and Arg-167. ATP is bound at residue Gly-202.

The protein belongs to the adenylate kinase family. Monomer.

The protein resides in the cytoplasm. The enzyme catalyses AMP + ATP = 2 ADP. Its pathway is purine metabolism; AMP biosynthesis via salvage pathway; AMP from ADP: step 1/1. Its function is as follows. Catalyzes the reversible transfer of the terminal phosphate group between ATP and AMP. Plays an important role in cellular energy homeostasis and in adenine nucleotide metabolism. The sequence is that of Adenylate kinase from Vesicomyosocius okutanii subsp. Calyptogena okutanii (strain HA).